A 98-amino-acid polypeptide reads, in one-letter code: MTLVHMNLLLAFAMSLTGLLMYRSHLMSALLCLEGMVLSLFILATITTLNSHFTLANMMPIILLVFAACEAAIGLALLVKISNTYGTDHVQNLNLLQC.

The next 3 helical transmembrane spans lie at 1-21, 26-46, and 59-79; these read MTLVHMNLLLAFAMSLTGLLM, LMSALLCLEGMVLSLFILATI, and MPIILLVFAACEAAIGLALLV.

It belongs to the complex I subunit 4L family. As to quaternary structure, core subunit of respiratory chain NADH dehydrogenase (Complex I) which is composed of 45 different subunits.

The protein resides in the mitochondrion inner membrane. It catalyses the reaction a ubiquinone + NADH + 5 H(+)(in) = a ubiquinol + NAD(+) + 4 H(+)(out). Core subunit of the mitochondrial membrane respiratory chain NADH dehydrogenase (Complex I) which catalyzes electron transfer from NADH through the respiratory chain, using ubiquinone as an electron acceptor. Part of the enzyme membrane arm which is embedded in the lipid bilayer and involved in proton translocation. This chain is NADH-ubiquinone oxidoreductase chain 4L (MT-ND4L), found in Pontoporia blainvillei (Franciscana).